Consider the following 480-residue polypeptide: Glutamyl-tRNA(Gln) amidotransferase subunit A (480 aa).

Catalysis depends on charge relay system residues K76 and S151. Residue S175 is the Acyl-ester intermediate of the active site.

Belongs to the amidase family. GatA subfamily. Heterotrimer of A, B and C subunits.

It carries out the reaction L-glutamyl-tRNA(Gln) + L-glutamine + ATP + H2O = L-glutaminyl-tRNA(Gln) + L-glutamate + ADP + phosphate + H(+). Functionally, allows the formation of correctly charged Gln-tRNA(Gln) through the transamidation of misacylated Glu-tRNA(Gln) in organisms which lack glutaminyl-tRNA synthetase. The reaction takes place in the presence of glutamine and ATP through an activated gamma-phospho-Glu-tRNA(Gln). The sequence is that of Glutamyl-tRNA(Gln) amidotransferase subunit A from Exiguobacterium sibiricum (strain DSM 17290 / CCUG 55495 / CIP 109462 / JCM 13490 / 255-15).